The sequence spans 252 residues: Endonuclease NucS (252 aa).

It belongs to the NucS endonuclease family.

The protein localises to the cytoplasm. Functionally, cleaves both 3' and 5' ssDNA extremities of branched DNA structures. The polypeptide is Endonuclease NucS (Thermococcus kodakarensis (strain ATCC BAA-918 / JCM 12380 / KOD1) (Pyrococcus kodakaraensis (strain KOD1))).